The primary structure comprises 217 residues: ATP synthase F(0) complex subunit a (217 aa).

The next 6 helical transmembrane spans lie at 20 to 40 (MNWI…WILP), 70 to 90 (PAFL…FSLF), 100 to 120 (MVFS…LSTC), 126 to 146 (MIAH…MTII), 166 to 188 (LIAG…IIFI), and 193 to 215 (MIFE…SLYS).

This sequence belongs to the ATPase A chain family. Component of the ATP synthase complex composed at least of ATP5F1A/subunit alpha, ATP5F1B/subunit beta, ATP5MC1/subunit c (homooctomer), MT-ATP6/subunit a, MT-ATP8/subunit 8, ATP5ME/subunit e, ATP5MF/subunit f, ATP5MG/subunit g, ATP5MK/subunit k, ATP5MJ/subunit j, ATP5F1C/subunit gamma, ATP5F1D/subunit delta, ATP5F1E/subunit epsilon, ATP5PF/subunit F6, ATP5PB/subunit b, ATP5PD/subunit d, ATP5PO/subunit OSCP. ATP synthase complex consists of a soluble F(1) head domain (subunits alpha(3) and beta(3)) - the catalytic core - and a membrane F(0) domain - the membrane proton channel (subunits c, a, 8, e, f, g, k and j). These two domains are linked by a central stalk (subunits gamma, delta, and epsilon) rotating inside the F1 region and a stationary peripheral stalk (subunits F6, b, d, and OSCP). Interacts with DNAJC30; interaction is direct.

The protein localises to the mitochondrion inner membrane. The enzyme catalyses H(+)(in) = H(+)(out). Functionally, subunit a, of the mitochondrial membrane ATP synthase complex (F(1)F(0) ATP synthase or Complex V) that produces ATP from ADP in the presence of a proton gradient across the membrane which is generated by electron transport complexes of the respiratory chain. ATP synthase complex consist of a soluble F(1) head domain - the catalytic core - and a membrane F(1) domain - the membrane proton channel. These two domains are linked by a central stalk rotating inside the F(1) region and a stationary peripheral stalk. During catalysis, ATP synthesis in the catalytic domain of F(1) is coupled via a rotary mechanism of the central stalk subunits to proton translocation. With the subunit c (ATP5MC1), forms the proton-conducting channel in the F(0) domain, that contains two crucial half-channels (inlet and outlet) that facilitate proton movement from the mitochondrial intermembrane space (IMS) into the matrix. Protons are taken up via the inlet half-channel and released through the outlet half-channel, following a Grotthuss mechanism. The sequence is that of ATP synthase F(0) complex subunit a from Rhopalosiphum padi (Bird cherry-oat aphid).